The primary structure comprises 419 residues: Serine hydroxymethyltransferase (419 aa).

(6S)-5,6,7,8-tetrahydrofolate contacts are provided by residues leucine 121 and 125–127 (GHL). Position 229 is an N6-(pyridoxal phosphate)lysine (lysine 229). 354-356 (SPF) serves as a coordination point for (6S)-5,6,7,8-tetrahydrofolate.

Belongs to the SHMT family. Homodimer. Requires pyridoxal 5'-phosphate as cofactor.

It localises to the cytoplasm. The enzyme catalyses (6R)-5,10-methylene-5,6,7,8-tetrahydrofolate + glycine + H2O = (6S)-5,6,7,8-tetrahydrofolate + L-serine. The protein operates within one-carbon metabolism; tetrahydrofolate interconversion. It functions in the pathway amino-acid biosynthesis; glycine biosynthesis; glycine from L-serine: step 1/1. In terms of biological role, catalyzes the reversible interconversion of serine and glycine with tetrahydrofolate (THF) serving as the one-carbon carrier. This reaction serves as the major source of one-carbon groups required for the biosynthesis of purines, thymidylate, methionine, and other important biomolecules. Also exhibits THF-independent aldolase activity toward beta-hydroxyamino acids, producing glycine and aldehydes, via a retro-aldol mechanism. This Coxiella burnetii (strain CbuG_Q212) (Coxiella burnetii (strain Q212)) protein is Serine hydroxymethyltransferase.